Reading from the N-terminus, the 955-residue chain is MTRKNTTTNPWAKFHGPNLGYVIEQYDLYVTGAGSVDPELQELFEIFGAPSFQDDVVTGDNTATHFSPQNTGNIEKILKVVQLVEQIRSFGHTLAHINPMEDAANGQSLLEKAMNELSDADLKAIPAKTVWQDAPEGIHTALDVIHRLKDVYTKSLAYEFSHIQDSEERTWLHQMVESNSLRQPLSNKKRTALLKRLTAVEGFEQFLHKTFVGQKRFSIEGVDMLVPVLDEIVLEGAKNGVEDVMIGMAHRGRLSVLAHVLEKPYSHMFAEFKHAKIEGAVANSGWTGDVKYHLGREQVVSNEEVSTRVTLANNPSHLEFVNPVVEGFARAAQENRKKSGLPDQDISKSFVILVHGDAAFPGQGIVSETLNLSRLNAYQTGGTIHVIANNAVGFTTDSYDSRSTKYSSDLAKGFDIPIVHVNADDPEACLAAANLAIQYRMLFKKDFLIDLIGYRRYGHNEMDDPAVTQPQVYKKIKNHPTVRAIYADQLQAAGVLNADEVETITQFTQEQLKSDYAQVPPADTSDATIHVKVPDVVAKGIQPIDTGVEIDSLRAINEGLLSWPEGFNVYPKVKKILERRKDALEENGKIEWALAESLAFASILQEGTPIRLTGQDSQRGTFAHRHIVLHDTDTNETYSPLHRLPNINASFSVHNSPLSEAAVVGYEYGYNVFAPETLVMWEAQYGDFSNTAQALFDQYVSAGRAKWGQKSGLVLLLPHGYEGQGPEHSSARPERFLQLAAENNWTVANLTSAAQYFHILRRQASILGTEAVRPLVLMTPKSLLRHPLTLSTASQLSEGRFQPALEQENLGTKPNKVKRLVLSTGKMAIDLAAEIESGKHEYNLDEVHVVRIEQLYPFPAEKVQSIIKRFKNLEEIIWVQEEPRNMGAWHYMAPILFELAGDKVKTGYIGRPDRSSPSGGDPFAHKAEQELIVAHALDVKYNFRQDKQEIEVFSN.

This sequence belongs to the alpha-ketoglutarate dehydrogenase family. As to quaternary structure, homodimer. Part of the 2-oxoglutarate dehydrogenase (OGDH) complex composed of E1 (2-oxoglutarate dehydrogenase), E2 (dihydrolipoamide succinyltransferase) and E3 (dihydrolipoamide dehydrogenase); the complex contains multiple copies of the three enzymatic components (E1, E2 and E3). The cofactor is thiamine diphosphate.

The enzyme catalyses N(6)-[(R)-lipoyl]-L-lysyl-[protein] + 2-oxoglutarate + H(+) = N(6)-[(R)-S(8)-succinyldihydrolipoyl]-L-lysyl-[protein] + CO2. In terms of biological role, E1 component of the 2-oxoglutarate dehydrogenase (OGDH) complex which catalyzes the decarboxylation of 2-oxoglutarate, the first step in the conversion of 2-oxoglutarate to succinyl-CoA and CO(2). The chain is 2-oxoglutarate dehydrogenase E1 component from Bacillus cereus (strain G9842).